The chain runs to 118 residues: MDPRLRAPIFLPILTPETLQKKKQIKGNKTTIYKNGFMLFRSRLHKILNLSGDWAGASAKCSIIWHTLPQNVRLAWSQLAELSHYQDVRKQIAKLERILYSKRLNGHNNYKLHISRVQ.

Residues 29–97 constitute a DNA-binding region (HMG box); the sequence is KTTIYKNGFM…VRKQIAKLER (69 aa).

Its subcellular location is the nucleus. Its function is as follows. Mating type proteins are sequence specific DNA-binding proteins that act as master switches in yeast differentiation by controlling gene expression in a cell type-specific fashion. Required for conjugation and efficient meiosis. The chain is Mating-type P-specific polypeptide Pc (matPc) from Schizosaccharomyces kambucha (Fission yeast).